The sequence spans 182 residues: Large ribosomal subunit protein uL6 (182 aa).

The protein belongs to the universal ribosomal protein uL6 family. In terms of assembly, part of the 50S ribosomal subunit.

Its function is as follows. This protein binds to the 23S rRNA, and is important in its secondary structure. It is located near the subunit interface in the base of the L7/L12 stalk, and near the tRNA binding site of the peptidyltransferase center. This chain is Large ribosomal subunit protein uL6, found in Aeropyrum pernix (strain ATCC 700893 / DSM 11879 / JCM 9820 / NBRC 100138 / K1).